Consider the following 348-residue polypeptide: MDYRELTARERQILGIIIQSYVVSAAPVGSKYIARHYNLGLSDATIRNVMAELEELGFISQPHTSAGRVPTDKGYRYYVDLIMTVKTLDEQEKQRFEQHITPLERKGTSADVLLSAVKVLGTISRQLSVVLSPTLSNALFEKLDMVLLSSTRMMVIISIQSLFVKTIVMELHMQVSRQMLDEVVDVLNERLSGLTLSEIRRSINQRLADCSCDNELKNLIVRSAGTLFDEMPVFERLYISGTEYLVEQPEFQQPEKVRDLITMLEDKFSVATLVEQHHANNPDVTITIGKEHGKRQAEDLTVLSAPYYVGDMVGTVGILGPKRMDYEHAVRILHYMAGSLSSTLSIQN.

The protein belongs to the HrcA family.

Its function is as follows. Negative regulator of class I heat shock genes (grpE-dnaK-dnaJ and groELS operons). Prevents heat-shock induction of these operons. This Chlorobium chlorochromatii (strain CaD3) protein is Heat-inducible transcription repressor HrcA.